The following is a 230-amino-acid chain: Ribonuclease 3 (230 aa).

Residues 8-135 enclose the RNase III domain; that stretch reads IVELKEKLGI…LIGAVYLQTN (128 aa). Glu-48 is a Mg(2+) binding site. Asp-52 is an active-site residue. The Mg(2+) site is built by Asp-121 and Glu-124. Glu-124 is an active-site residue. The 70-residue stretch at 161 to 230 folds into the DRBM domain; sequence DYKTMIQELV…AHFAFQKLSK (70 aa).

It belongs to the ribonuclease III family. As to quaternary structure, homodimer. It depends on Mg(2+) as a cofactor.

It localises to the cytoplasm. It carries out the reaction Endonucleolytic cleavage to 5'-phosphomonoester.. Its function is as follows. Digests double-stranded RNA. Involved in the processing of primary rRNA transcript to yield the immediate precursors to the large and small rRNAs (23S and 16S). Processes some mRNAs, and tRNAs when they are encoded in the rRNA operon. Processes pre-crRNA and tracrRNA of type II CRISPR loci if present in the organism. The sequence is that of Ribonuclease 3 from Natranaerobius thermophilus (strain ATCC BAA-1301 / DSM 18059 / JW/NM-WN-LF).